The primary structure comprises 584 residues: Peroxynitrite isomerase THAP4 (584 aa).

The THAP-type zinc finger occupies 1-85; the sequence is MVICCAAANC…LKPTAVPSIF (85 aa). The disordered stretch occupies residues 84–330; sequence IFHLAEKKRR…EAVQSEHSDA (247 aa). Residues 89–104 show a composition bias toward basic residues; sequence EKKRRAGGHGRPRRRD. The segment covering 122-138 has biased composition (low complexity); the sequence is GKAAAGSPSSSSASPMA. Positions 158-178 are enriched in basic and acidic residues; the sequence is AARETAGQERGRQPLEGRAED. A compositionally biased stretch (low complexity) spans 190 to 208; that stretch reads GEAGTGAEDAGEEGATPAD. An HCFC1-binding motif (HBM) motif is present at residues 236 to 239; that stretch reads LHSY. Ser240 bears the Phosphoserine mark. Over residues 248-267 the composition is skewed to basic and acidic residues; the sequence is ERPAVPREPVERKRLRRDAE. The tract at residues 422–584 is nitrobindin; that stretch reads PPKMSPVVEP…LHVTYKKVTP (163 aa). Positions 451 and 574 each coordinate heme b.

This sequence in the C-terminal section; belongs to the nitrobindin family. Homodimer. Heme b is required as a cofactor.

The protein localises to the cytoplasm. Its subcellular location is the nucleus. It catalyses the reaction peroxynitrite = nitrate. It functions in the pathway nitrogen metabolism. Its function is as follows. Heme-binding protein able to scavenge peroxynitrite and to protect free L-tyrosine against peroxynitrite-mediated nitration, by acting as a peroxynitrite isomerase that converts peroxynitrite to nitrate. Therefore, this protein likely plays a role in peroxynitrite sensing and in the detoxification of reactive nitrogen and oxygen species (RNS and ROS, respectively). Is able to bind nitric oxide (NO) in vitro, but may act as a sensor of peroxynitrite levels in vivo, possibly modulating the transcriptional activity residing in the N-terminal region. The chain is Peroxynitrite isomerase THAP4 from Bos taurus (Bovine).